We begin with the raw amino-acid sequence, 100 residues long: Putative pterin-4-alpha-carbinolamine dehydratase (100 aa).

The protein belongs to the pterin-4-alpha-carbinolamine dehydratase family.

It catalyses the reaction (4aS,6R)-4a-hydroxy-L-erythro-5,6,7,8-tetrahydrobiopterin = (6R)-L-erythro-6,7-dihydrobiopterin + H2O. In Bradyrhizobium diazoefficiens (strain JCM 10833 / BCRC 13528 / IAM 13628 / NBRC 14792 / USDA 110), this protein is Putative pterin-4-alpha-carbinolamine dehydratase.